Reading from the N-terminus, the 210-residue chain is Scoloptoxin SSD552 (210 aa).

The N-terminal stretch at 1 to 23 is a signal peptide; sequence MNILLSSTLFVLLMFQIIGSGMG.

Contains 3 disulfide bonds. Expressed by the venom gland.

Its subcellular location is the secreted. The polypeptide is Scoloptoxin SSD552 (Scolopendra dehaani (Thai centipede)).